A 404-amino-acid chain; its full sequence is Cysteine desulfurase IscS (404 aa).

Pyridoxal 5'-phosphate is bound by residues alanine 75–threonine 76, asparagine 155, glutamine 183, and serine 203–histidine 205. An N6-(pyridoxal phosphate)lysine modification is found at lysine 206. Threonine 243 is a binding site for pyridoxal 5'-phosphate. Residue cysteine 328 is the Cysteine persulfide intermediate of the active site. Cysteine 328 contacts [2Fe-2S] cluster.

It belongs to the class-V pyridoxal-phosphate-dependent aminotransferase family. NifS/IscS subfamily. As to quaternary structure, homodimer. Forms a heterotetramer with IscU, interacts with other sulfur acceptors. It depends on pyridoxal 5'-phosphate as a cofactor.

The protein resides in the cytoplasm. It carries out the reaction (sulfur carrier)-H + L-cysteine = (sulfur carrier)-SH + L-alanine. It participates in cofactor biosynthesis; iron-sulfur cluster biosynthesis. Master enzyme that delivers sulfur to a number of partners involved in Fe-S cluster assembly, tRNA modification or cofactor biosynthesis. Catalyzes the removal of elemental sulfur atoms from cysteine to produce alanine. Functions as a sulfur delivery protein for Fe-S cluster synthesis onto IscU, an Fe-S scaffold assembly protein, as well as other S acceptor proteins. The protein is Cysteine desulfurase IscS of Buchnera aphidicola subsp. Acyrthosiphon pisum (strain 5A).